The primary structure comprises 292 residues: uncharacterized protein (292 aa).

A helical transmembrane segment spans residues 17 to 37 (SMDMFFFLFIFLLFIYPEMMM).

It to M.jannaschii MJ0137.

It localises to the membrane. This is an uncharacterized protein from Methanocaldococcus jannaschii (strain ATCC 43067 / DSM 2661 / JAL-1 / JCM 10045 / NBRC 100440) (Methanococcus jannaschii).